Consider the following 1164-residue polypeptide: DNA-directed RNA polymerase 133 kDa polypeptide (1164 aa).

It belongs to the RNA polymerase beta chain family. As to quaternary structure, the DNA-dependent RNA polymerase used for intermediate and late genes expression consists of eight subunits 147 kDa, 133 kDa, 35 kDa, 30 kDa, 22 kDa, 19 kDa, 18 kDa and 7 kDa totalling more than 500 kDa in mass. The same holoenzyme, with the addition of the transcription-specificity factor RAP94, is used for early gene expression.

The protein resides in the virion. The enzyme catalyses RNA(n) + a ribonucleoside 5'-triphosphate = RNA(n+1) + diphosphate. Part of the DNA-dependent RNA polymerase which catalyzes the transcription of viral DNA into RNA using the four ribonucleoside triphosphates as substrates. Responsible for the transcription of early, intermediate and late genes. DNA-dependent RNA polymerase associates with the early transcription factor (ETF), itself composed of D6 and A7, thereby allowing the early genes transcription. Late transcription, and probably also intermediate transcription, require newly synthesized RNA polymerase. The sequence is that of DNA-directed RNA polymerase 133 kDa polypeptide (RPO132) from Homo sapiens (Human).